The chain runs to 70 residues: Probable tautomerase RSp0893 (70 aa).

Catalysis depends on P2, which acts as the Proton acceptor; via imino nitrogen.

This sequence belongs to the 4-oxalocrotonate tautomerase family.

The sequence is that of Probable tautomerase RSp0893 from Ralstonia nicotianae (strain ATCC BAA-1114 / GMI1000) (Ralstonia solanacearum).